A 456-amino-acid chain; its full sequence is Bis(5'-adenosyl)-triphosphatase enpp4 (456 aa).

Positions 1–18 (MFNMKILVIPLFWGLVTG) are cleaved as a signal peptide. Residues 19–410 (YKGNSSDSSA…DQWCINLPEA (392 aa)) lie on the Extracellular side of the membrane. Residues Asp37 and Thr73 each contribute to the Zn(2+) site. The active-site AMP-threonine intermediate is Thr73. Residue Asn94 coordinates substrate. Asn148 is a glycosylation site (N-linked (GlcNAc...) asparagine). Tyr157 lines the substrate pocket. Asn169 carries N-linked (GlcNAc...) asparagine glycosylation. The Zn(2+) site is built by Asp192, His196, Asp240, and His241. Asp192 serves as a coordination point for substrate. An intrachain disulfide couples Cys257 to Cys290. Residues Asn279 and Asn330 are each glycosylated (N-linked (GlcNAc...) asparagine). Position 339 (His339) interacts with Zn(2+). The N-linked (GlcNAc...) asparagine glycan is linked to Asn389. Cys397 and Cys404 are disulfide-bonded. A helical transmembrane segment spans residues 411 to 431 (IGIVVSALLVLTMLTGLMIFM). The Cytoplasmic segment spans residues 432–456 (RSRASTSRPFSRLQLQEDDDDPLID).

Belongs to the nucleotide pyrophosphatase/phosphodiesterase family. Zn(2+) is required as a cofactor.

It is found in the cell membrane. It carries out the reaction P(1),P(3)-bis(5'-adenosyl) triphosphate + H2O = AMP + ADP + 2 H(+). Its function is as follows. Hydrolyzes extracellular Ap3A into AMP and ADP, and Ap4A into AMP and ATP. Ap3A and Ap4A are diadenosine polyphosphates thought to induce proliferation of vascular smooth muscle cells. Acts as a procoagulant, mediating platelet aggregation at the site of nascent thrombus via release of ADP from Ap3A and activation of ADP receptors. The chain is Bis(5'-adenosyl)-triphosphatase enpp4 (Enpp4) from Mus musculus (Mouse).